Here is a 146-residue protein sequence, read N- to C-terminus: Prefoldin subunit alpha 1 (146 aa).

Belongs to the prefoldin subunit alpha family. Heterohexamer of two alpha and four beta subunits.

It localises to the cytoplasm. In terms of biological role, molecular chaperone capable of stabilizing a range of proteins. Seems to fulfill an ATP-independent, HSP70-like function in archaeal de novo protein folding. The protein is Prefoldin subunit alpha 1 of Thermococcus kodakarensis (strain ATCC BAA-918 / JCM 12380 / KOD1) (Pyrococcus kodakaraensis (strain KOD1)).